Here is a 277-residue protein sequence, read N- to C-terminus: Large ribosomal subunit protein uL2 (277 aa).

Disordered regions lie at residues 34–55 and 213–277; these read LQPL…RHHG and WKGI…RKKK.

The protein belongs to the universal ribosomal protein uL2 family. As to quaternary structure, part of the 50S ribosomal subunit. Forms a bridge to the 30S subunit in the 70S ribosome.

Its function is as follows. One of the primary rRNA binding proteins. Required for association of the 30S and 50S subunits to form the 70S ribosome, for tRNA binding and peptide bond formation. It has been suggested to have peptidyltransferase activity; this is somewhat controversial. Makes several contacts with the 16S rRNA in the 70S ribosome. The polypeptide is Large ribosomal subunit protein uL2 (Staphylococcus haemolyticus (strain JCSC1435)).